The sequence spans 521 residues: Glutamate--cysteine ligase (521 aa).

Belongs to the glutamate--cysteine ligase type 1 family. Type 1 subfamily.

The enzyme catalyses L-cysteine + L-glutamate + ATP = gamma-L-glutamyl-L-cysteine + ADP + phosphate + H(+). It participates in sulfur metabolism; glutathione biosynthesis; glutathione from L-cysteine and L-glutamate: step 1/2. The protein is Glutamate--cysteine ligase of Aliivibrio salmonicida (strain LFI1238) (Vibrio salmonicida (strain LFI1238)).